Here is a 138-residue protein sequence, read N- to C-terminus: Large ribosomal subunit protein uL16 (138 aa).

Positions 1–15 (MLSPKKVKYRKKQRG) are enriched in basic residues. A disordered region spans residues 1–21 (MLSPKKVKYRKKQRGRLSGEA).

This sequence belongs to the universal ribosomal protein uL16 family. Part of the 50S ribosomal subunit.

Functionally, binds 23S rRNA and is also seen to make contacts with the A and possibly P site tRNAs. This is Large ribosomal subunit protein uL16 from Borrelia garinii subsp. bavariensis (strain ATCC BAA-2496 / DSM 23469 / PBi) (Borreliella bavariensis).